The chain runs to 432 residues: Adenosylhomocysteinase (432 aa).

The segment at 1-24 (MSAYSPLSAQLDADTDVDVESTRT) is disordered. The substrate site is built by aspartate 137 and glutamate 162. Residue 163–165 (TTT) coordinates NAD(+). Substrate is bound by residues lysine 192 and aspartate 196. Residues asparagine 197, 226-231 (GYGYCG), glutamate 249, asparagine 284, 305-307 (AGH), and asparagine 352 contribute to the NAD(+) site.

Belongs to the adenosylhomocysteinase family. It depends on NAD(+) as a cofactor.

It localises to the cytoplasm. It catalyses the reaction S-adenosyl-L-homocysteine + H2O = L-homocysteine + adenosine. It participates in amino-acid biosynthesis; L-homocysteine biosynthesis; L-homocysteine from S-adenosyl-L-homocysteine: step 1/1. Functionally, may play a key role in the regulation of the intracellular concentration of adenosylhomocysteine. This Haloquadratum walsbyi (strain DSM 16790 / HBSQ001) protein is Adenosylhomocysteinase.